A 342-amino-acid polypeptide reads, in one-letter code: Protein BMEI1586 (342 aa).

Residue Ser-90 is the Proton acceptor of the active site. Residues 91–92, Asp-251, and 256–257 contribute to the substrate site; these read GS and GT.

The protein belongs to the proline racemase family. Homotetramer.

It catalyses the reaction trans-4-hydroxy-L-proline = cis-4-hydroxy-D-proline. In vitro, catalyzes the epimerization of trans-4-hydroxy-L-proline (t4LHyp) to cis-4-hydroxy-D-proline (c4DHyp) and that of trans-3-hydroxy-L-proline (t3LHyp) to cis-3-hydroxy-D-proline (c3DHyp), albeit with very low efficiency. The physiological substrate may be different. Displays neither proline racemase activity nor t3LHyp dehydratase activity. The chain is Protein BMEI1586 from Brucella melitensis biotype 1 (strain ATCC 23456 / CCUG 17765 / NCTC 10094 / 16M).